We begin with the raw amino-acid sequence, 411 residues long: ATP-dependent Clp protease ATP-binding subunit ClpX (411 aa).

The ClpX-type ZB domain maps to 1–49; that stretch reads MSDKNIRCSFCGRTQKEVKKLIAGPGVYICDECVKLAYDIIEEEDSEEI. Zn(2+) contacts are provided by Cys-8, Cys-11, Cys-30, and Cys-33. 115 to 122 serves as a coordination point for ATP; the sequence is PTGVGKTL.

It belongs to the ClpX chaperone family. As to quaternary structure, component of the ClpX-ClpP complex. Forms a hexameric ring that, in the presence of ATP, binds to fourteen ClpP subunits assembled into a disk-like structure with a central cavity, resembling the structure of eukaryotic proteasomes.

ATP-dependent specificity component of the Clp protease. It directs the protease to specific substrates. Can perform chaperone functions in the absence of ClpP. In Dictyoglomus turgidum (strain DSM 6724 / Z-1310), this protein is ATP-dependent Clp protease ATP-binding subunit ClpX.